The primary structure comprises 173 residues: Translation initiation factor IF-3 (173 aa).

This sequence belongs to the IF-3 family. Monomer.

The protein resides in the cytoplasm. In terms of biological role, IF-3 binds to the 30S ribosomal subunit and shifts the equilibrium between 70S ribosomes and their 50S and 30S subunits in favor of the free subunits, thus enhancing the availability of 30S subunits on which protein synthesis initiation begins. This chain is Translation initiation factor IF-3, found in Phenylobacterium zucineum (strain HLK1).